The primary structure comprises 935 residues: Progesterone receptor (935 aa).

The segment at 1–164 (MTELKAKGPR…PATQGVLSPL (164 aa)) is AF3; mediates transcriptional activation. The disordered stretch occupies residues 1–254 (MTELKAKGPR…GGAAAGGGAA (254 aa)). A modulating, Pro-Rich region spans residues 1–568 (MTELKAKGPR…YSFESLPQKI (568 aa)). Position 20 is a phosphoserine (Ser20). Positions 55-59 (LDGLL) match the LXXL motif 1 motif. At Ser81 the chain carries Phosphoserine. Positions 115–119 (LDTLL) match the LXXL motif 2 motif. A phosphoserine mark is found at Ser130 and Ser162. Positions 165 to 305 (MSRSGGKAGD…LATTVMDFIH (141 aa)) are mediates transcriptional transrepression. Positions 183-187 (KVLPR) match the Nuclear localization signal motif. Phosphoserine is present on residues Ser190 and Ser213. The span at 220-231 (EVEEEDGSESED) shows a compositional bias: acidic residues. Residues 232–246 (SAGPLLKGKPRALGG) are compositionally biased toward low complexity. Ser294 carries the phosphoserine; by MAPK1 modification. The segment at 331-378 (GGAGAASAFAPPRSSPSASSTPVAVGDFPDCAYPPDAEPKDDAYPLYS) is disordered. The segment covering 335–350 (AASAFAPPRSSPSASS) has biased composition (low complexity). Phosphoserine; by MAPK is present on Ser345. A Glycyl lysine isopeptide (Lys-Gly) (interchain with G-Cter in SUMO); alternate cross-link involves residue Lys388. Residue Lys388 forms a Glycyl lysine isopeptide (Lys-Gly) (interchain with G-Cter in ubiquitin); alternate linkage. At Ser400 the chain carries Phosphoserine; by CDK2. Positions 418 to 430 (PLGPPPPLPPRAP) are enriched in pro residues. The segment at 418 to 438 (PLGPPPPLPPRAPPTRAGEAA) is disordered. Residues 456-548 (STLECILYKA…VYPPYLNYLR (93 aa)) are AF1; mediates transcriptional activation. A Glycyl lysine isopeptide (Lys-Gly) (interchain with G-Cter in SUMO) cross-link involves residue Lys533. 2 NR C4-type zinc fingers span residues 569–589 (CLIC…CGSC) and 605–629 (CAGR…LRKC). The segment at residues 569–641 (CLICGDEASG…AGMVLGGRKF (73 aa)) is a DNA-binding region (nuclear receptor). At Ser678 the chain carries Phosphoserine. Positions 681–915 (QDIQLIPPLI…EFPEMMSEVI (235 aa)) constitute an NR LBD domain. The interval 689–935 (LINLLMSIEP…MVKPLLFHKK (247 aa)) is AF2; mediates transcriptional activation.

Belongs to the nuclear hormone receptor family. Interacts with SMARD1 and UNC45A. Interacts with CUEDC2; the interaction promotes ubiquitination, decreases sumoylation, and represses transcriptional activity. Interacts with PIAS3; the interaction promotes sumoylation of PR in a hormone-dependent manner, inhibits DNA-binding, and alters nuclear export. Interacts with SP1; the interaction requires ligand-induced phosphorylation on Ser-345 by ERK1/2-MAPK. Interacts with PRMT2. Interacts with NCOA2 and NCOA1. Interacts with KLF9. Interacts with GTF2B. In terms of processing, phosphorylated on multiple serine sites. Several of these sites are hormone-dependent. Phosphorylation on Ser-294 is highly hormone-dependent and modulates ubiquitination and sumoylation on Lys-388. Phosphorylation on Ser-102 and Ser-345 also requires induction by hormone. Basal phosphorylation on Ser-81, Ser-162, Ser-190 and Ser-400 is increased in response to progesterone and can be phosphorylated in vitro by the CDK2-A1 complex. Increased levels of phosphorylation on Ser-400 also in the presence of EGF, heregulin, IGF, PMA and FBS. Phosphorylation at this site by CDK2 is ligand-independent, and increases nuclear translocation and transcriptional activity. Phosphorylation at Ser-162 and Ser-294, but not at Ser-190, is impaired during the G(2)/M phase of the cell cycle. Phosphorylation on Ser-345 by ERK1/2 MAPK is required for interaction with SP1. Post-translationally, sumoylation is hormone-dependent and represses transcriptional activity. Sumoylation on all three sites is enhanced by PIAS3. Desumoylated by SENP1. Sumoylation on Lys-388, the main site of sumoylation, is repressed by ubiquitination on the same site, and modulated by phosphorylation at Ser-294. Ubiquitination is hormone-dependent and represses sumoylation on the same site. Promoted by MAPK-mediated phosphorylation on Ser-294. In terms of processing, palmitoylated by ZDHHC7 and ZDHHC21. Palmitoylation is required for plasma membrane targeting and for rapid intracellular signaling via ERK and AKT kinases and cAMP generation.

Its subcellular location is the nucleus. It localises to the cytoplasm. Its function is as follows. The steroid hormones and their receptors are involved in the regulation of eukaryotic gene expression and affect cellular proliferation and differentiation in target tissues. Transcriptional activator of several progesteron-dependent promoters in a variety of cell types. Involved in activation of SRC-dependent MAPK signaling on hormone stimulation. This Pongo pygmaeus (Bornean orangutan) protein is Progesterone receptor (PGR).